The chain runs to 943 residues: Isoleucine--tRNA ligase (943 aa).

The 'HIGH' region motif lies at 59–69; it reads PYANGQIHLGH. Glutamate 577 is a binding site for L-isoleucyl-5'-AMP. The short motif at 618–622 is the 'KMSKS' region element; it reads KMSKS. Residue lysine 621 coordinates ATP. Cysteine 906, cysteine 909, cysteine 926, and cysteine 929 together coordinate Zn(2+).

The protein belongs to the class-I aminoacyl-tRNA synthetase family. IleS type 1 subfamily. In terms of assembly, monomer. The cofactor is Zn(2+).

It is found in the cytoplasm. It carries out the reaction tRNA(Ile) + L-isoleucine + ATP = L-isoleucyl-tRNA(Ile) + AMP + diphosphate. Catalyzes the attachment of isoleucine to tRNA(Ile). As IleRS can inadvertently accommodate and process structurally similar amino acids such as valine, to avoid such errors it has two additional distinct tRNA(Ile)-dependent editing activities. One activity is designated as 'pretransfer' editing and involves the hydrolysis of activated Val-AMP. The other activity is designated 'posttransfer' editing and involves deacylation of mischarged Val-tRNA(Ile). The polypeptide is Isoleucine--tRNA ligase (Xylella fastidiosa (strain M23)).